Consider the following 81-residue polypeptide: Sulfur carrier protein TusA (81 aa).

Cys-19 (cysteine persulfide intermediate) is an active-site residue.

Belongs to the sulfur carrier protein TusA family. As to quaternary structure, interacts with IscS.

Its subcellular location is the cytoplasm. Its pathway is tRNA modification. Its function is as follows. Sulfur carrier protein involved in sulfur trafficking in the cell. Part of a sulfur-relay system required for 2-thiolation during synthesis of 2-thiouridine of the modified wobble base 5-methylaminomethyl-2-thiouridine (mnm(5)s(2)U) in tRNA. Interacts with IscS and stimulates its cysteine desulfurase activity. Accepts an activated sulfur from IscS, which is then transferred to TusD, and thus determines the direction of sulfur flow from IscS to 2-thiouridine formation. Also appears to be involved in sulfur transfer for the biosynthesis of molybdopterin. In Cronobacter sakazakii (strain ATCC BAA-894) (Enterobacter sakazakii), this protein is Sulfur carrier protein TusA.